The sequence spans 217 residues: Ras-related protein Rab-19 (217 aa).

Positions 26, 28, 29, 30, 31, 32, 42, 43, 44, 45, and 49 each coordinate GTP. Position 31 (T31) interacts with Mg(2+). The Switch 1 motif lies at 39–54 (SGVYSESQQNTIGVDF). 2 residues coordinate Mg(2+): T49 and D72. The Switch 2 motif lies at 74 to 89 (AGQERFRTITQSYYRS). Residues G75, N130, K131, D133, S161, A162, and K163 each coordinate GTP. S-geranylgeranyl cysteine attachment occurs at residues C215 and C217. Position 217 is a cysteine methyl ester (C217).

This sequence belongs to the small GTPase superfamily. Rab family. Mg(2+) is required as a cofactor. Expressed in a tissue-specific manner. Detected at high levels in intestine, lung and spleen, and at a lower level in kidney.

It localises to the cell membrane. The catalysed reaction is GTP + H2O = GDP + phosphate + H(+). Its activity is regulated as follows. Regulated by guanine nucleotide exchange factors (GEFs) which promote the exchange of bound GDP for free GTP. Regulated by GTPase activating proteins (GAPs) which increase the GTP hydrolysis activity. Inhibited by GDP dissociation inhibitors (GDIs). The small GTPases Rab are key regulators of intracellular membrane trafficking, from the formation of transport vesicles to their fusion with membranes. Rabs cycle between an inactive GDP-bound form and an active GTP-bound form that is able to recruit to membranes different set of downstream effectors directly responsible for vesicle formation, movement, tethering and fusion. This chain is Ras-related protein Rab-19, found in Mus musculus (Mouse).